Reading from the N-terminus, the 115-residue chain is Nucleoid-associated protein Ava_2322 (115 aa).

This sequence belongs to the YbaB/EbfC family. As to quaternary structure, homodimer.

It is found in the cytoplasm. The protein resides in the nucleoid. In terms of biological role, binds to DNA and alters its conformation. May be involved in regulation of gene expression, nucleoid organization and DNA protection. This Trichormus variabilis (strain ATCC 29413 / PCC 7937) (Anabaena variabilis) protein is Nucleoid-associated protein Ava_2322.